Reading from the N-terminus, the 101-residue chain is Urease subunit beta (101 aa).

The protein belongs to the urease beta subunit family. As to quaternary structure, heterotrimer of UreA (gamma), UreB (beta) and UreC (alpha) subunits. Three heterotrimers associate to form the active enzyme.

The protein localises to the cytoplasm. It carries out the reaction urea + 2 H2O + H(+) = hydrogencarbonate + 2 NH4(+). The protein operates within nitrogen metabolism; urea degradation; CO(2) and NH(3) from urea (urease route): step 1/1. The sequence is that of Urease subunit beta from Dinoroseobacter shibae (strain DSM 16493 / NCIMB 14021 / DFL 12).